Reading from the N-terminus, the 793-residue chain is Probable phosphoketolase (793 aa).

It belongs to the XFP family. Requires thiamine diphosphate as cofactor.

This Gloeobacter violaceus (strain ATCC 29082 / PCC 7421) protein is Probable phosphoketolase.